The following is a 204-amino-acid chain: Histidine biosynthesis bifunctional protein HisIE (204 aa).

The interval 1–114 (MLTEQQINQL…FAPAASDWSF (114 aa)) is phosphoribosyl-AMP cyclohydrolase. The interval 115 to 204 (LYQLEQLLAS…IGRLRERHEK (90 aa)) is phosphoribosyl-ATP pyrophosphohydrolase.

This sequence in the N-terminal section; belongs to the PRA-CH family. In the C-terminal section; belongs to the PRA-PH family.

It is found in the cytoplasm. The catalysed reaction is 1-(5-phospho-beta-D-ribosyl)-ATP + H2O = 1-(5-phospho-beta-D-ribosyl)-5'-AMP + diphosphate + H(+). The enzyme catalyses 1-(5-phospho-beta-D-ribosyl)-5'-AMP + H2O = 1-(5-phospho-beta-D-ribosyl)-5-[(5-phospho-beta-D-ribosylamino)methylideneamino]imidazole-4-carboxamide. The protein operates within amino-acid biosynthesis; L-histidine biosynthesis; L-histidine from 5-phospho-alpha-D-ribose 1-diphosphate: step 2/9. It participates in amino-acid biosynthesis; L-histidine biosynthesis; L-histidine from 5-phospho-alpha-D-ribose 1-diphosphate: step 3/9. The sequence is that of Histidine biosynthesis bifunctional protein HisIE (hisI) from Yersinia pestis.